A 213-amino-acid chain; its full sequence is Cell wall protein PGA62 (213 aa).

The N-terminal stretch at 1–18 (MQFSSAVVLSAVAGSALA) is a signal peptide. N-linked (GlcNAc...) asparagine glycosylation is present at Asn22. Residues 120–194 (CPLPSTEAPG…APAVSTAEAG (75 aa)) are disordered. Polar residues predominate over residues 145 to 172 (PVPTTAAESSPAKTTAAESSPAQETTPK). A compositionally biased stretch (low complexity) spans 173-194 (TVAAESSSAETTAPAVSTAEAG). The GPI-anchor amidated glycine moiety is linked to residue Gly194. Positions 195–213 (AAANAVPVAAGLLALAALF) are cleaved as a propeptide — removed in mature form.

Belongs to the HWP1 family. In terms of processing, N- and O-glycosylated. The GPI-anchor is attached to the protein in the endoplasmic reticulum and serves to target the protein to the cell surface. There, the glucosamine-inositol phospholipid moiety is cleaved off and the GPI-modified mannoprotein is covalently attached via its lipidless GPI glycan remnant to the 1,6-beta-glucan of the outer cell wall layer.

Its subcellular location is the secreted. The protein resides in the cell wall. It is found in the membrane. In terms of biological role, cell wall protein necessary for cell wall integrity. Plays only a minor role in hyphal morphogenesis and is not critical to biofilm formation. This Candida albicans (strain SC5314 / ATCC MYA-2876) (Yeast) protein is Cell wall protein PGA62 (PGA62).